We begin with the raw amino-acid sequence, 917 residues long: Gamma-tubulin complex component 3 (917 aa).

It belongs to the TUBGCP family. Gamma-tubulin small complex (Gamma TuSC) is a heterotetrameric complex which contains two molecules of gamma-tubulin, and one molecule each of Dgrip84 and Dgrip91. The gamma-tubulin in this complex binds preferentially to GDP over GTP.

It localises to the cytoplasm. It is found in the cytoskeleton. Its subcellular location is the microtubule organizing center. The protein localises to the centrosome. The protein resides in the perinuclear region. The polypeptide is Gamma-tubulin complex component 3 (Drosophila melanogaster (Fruit fly)).